We begin with the raw amino-acid sequence, 244 residues long: MNLSQQNQHSNPITEAAKATFPYSVPMIAGFLFLGIAYGIYMKALGFGFLYPTLMALLIYAGSVEFIAAGALIAPFSPISVLLITLMISARQIFYGISMLEKYGIHIGKKRWYLITTLVDESFSLNYMAKIPPHLDKGWYMFFVSLYLHIYWVLGAAMGNLFGTVLPFNLKGVEFSMTALFLVIFAENWLKGKSHESSLLGLGIALVFLLIIGKEYFLIPTLIGIWLILTMRITKLETKLESLK.

Transmembrane regions (helical) follow at residues 21–41 (FPYS…YGIY), 44–64 (ALGF…AGSV), 66–86 (FIAA…LITL), 139–159 (WYMF…AAMG), 165–185 (VLPF…LVIF), and 199–219 (LLGL…YFLI).

This sequence belongs to the AzlC family.

It localises to the cell membrane. This is an uncharacterized protein from Haemophilus influenzae (strain ATCC 51907 / DSM 11121 / KW20 / Rd).